The primary structure comprises 89 residues: Probable Fe(2+)-trafficking protein (89 aa).

This sequence belongs to the Fe(2+)-trafficking protein family.

Could be a mediator in iron transactions between iron acquisition and iron-requiring processes, such as synthesis and/or repair of Fe-S clusters in biosynthetic enzymes. This is Probable Fe(2+)-trafficking protein from Legionella pneumophila (strain Paris).